Here is a 402-residue protein sequence, read N- to C-terminus: MKNIIALSSVPLVMTLGNSMLIPVLPMMEKKLSVTSFQVSLIITVYSVVAIICIPIAGYLSDRFGRKKILLPCLLIAGLGGAVAAFASTYMKNPYAMILAGRVLQGIGSAGAAPIVMPFIGDLFKGDDEKVSAGLGDIETANTSGKVLSPILGALLASWYWFVPFWFIPFFCLISFLLVLFLVAKPEEDEDAPAVSEFIKSVKKIFKQDGRWLYTVFIIGCVIMFLLFGVLFYLSDTLENKYAIDGVAKGGLLAIPLLFLSTSSFIAGKKIGKDKGRMKFCVVTGMILLTLSFIALWWNHSFYFLFVFLSFGGIGIGMALPALDALITEGIESEQCGTISSFYNSMRFIGVALGPPVFAALMSNANWIIFILSAFCSIVSLFLVLFTVDAKKSEEEKNLGTV.

Transmembrane regions (helical) follow at residues 4–24 (IIAL…LIPV), 39–59 (VSLI…IAGY), 69–89 (ILLP…FAST), 104–124 (LQGI…GDLF), 162–182 (FVPF…VLFL), 212–232 (WLYT…GVLF), 247–267 (VAKG…SFIA), 278–298 (MKFC…ALWW), 302–322 (FYFL…ALPA), 342–362 (FYNS…AALM), and 368–388 (IIFI…LFTV).

Belongs to the major facilitator superfamily.

It is found in the cell membrane. In terms of biological role, involved in secretion of bacillibactin. This Bacillus subtilis (strain 168) protein is Bacillibactin exporter (ymfD).